Here is a 202-residue protein sequence, read N- to C-terminus: Na(+)-translocating NADH-quinone reductase subunit E (202 aa).

A run of 6 helical transmembrane segments spans residues 5–25 (VSLFITSVFIENMALAYFLGM), 35–55 (VSTAIGLGVAVVVVMAITVPL), 81–101 (FLGLLSYIGLIAATVQILEMF), 114–134 (GVFLPLITVNCAILGGVLFMV), 144–164 (VVYGVGAGFGWALAITALAGI), and 180–200 (LGITFITVGLMSLGFMSFGGM).

The protein belongs to the NqrDE/RnfAE family. In terms of assembly, composed of six subunits; NqrA, NqrB, NqrC, NqrD, NqrE and NqrF.

The protein localises to the cell inner membrane. The enzyme catalyses a ubiquinone + n Na(+)(in) + NADH + H(+) = a ubiquinol + n Na(+)(out) + NAD(+). Functionally, NQR complex catalyzes the reduction of ubiquinone-1 to ubiquinol by two successive reactions, coupled with the transport of Na(+) ions from the cytoplasm to the periplasm. NqrA to NqrE are probably involved in the second step, the conversion of ubisemiquinone to ubiquinol. In Psychrobacter arcticus (strain DSM 17307 / VKM B-2377 / 273-4), this protein is Na(+)-translocating NADH-quinone reductase subunit E.